The sequence spans 1582 residues: ATP-binding cassette sub-family C member 8 (1582 aa).

At 1–30 (MPLAFCGTENHSAAYRVDQGVLNNGCFVDA) the chain is on the extracellular side. The cysteines at positions 6 and 26 are disulfide-linked. Residue Asn10 is glycosylated (N-linked (GlcNAc...) asparagine). Residues 31 to 47 (LNVVPHVFLLFITFPIL) traverse the membrane as a helical segment. The Cytoplasmic segment spans residues 48-72 (FIGWGSQSSKVHIHHSTWLHFPGHN). Residues 73-89 (LRWILTFILLFVLVCEI) form a helical membrane-spanning segment. The Extracellular segment spans residues 90 to 106 (AEGILSDGVTESRHLHL). The helical transmembrane segment at 107–123 (YMPAGMAFMAAITSVVY) threads the bilayer. Residues 124–136 (YHNIETSNFPKLL) lie on the Cytoplasmic side of the membrane. The chain crosses the membrane as a helical span at residues 137–153 (IALLIYWTLAFITKTIK). The Extracellular segment spans residues 154–169 (FVKFYDHAIGFSQLRF). A helical membrane pass occupies residues 170–186 (CLTGLLVILYGMLLLVE). Residues 187–303 (VNVIRVRRYV…AFGRRLVLSS (117 aa)) are Cytoplasmic-facing. The region spanning 299-602 (LVLSSTFRIL…LSSVVRSTVK (304 aa)) is the ABC transmembrane type-1 1 domain. A helical membrane pass occupies residues 304–319 (TFRILADLLGFAGPLC). The Extracellular segment spans residues 320 to 356 (IFGIVDHLGKENHVFQPKTQFLGVYFVSSQEFLGNAY). Residues 357–372 (VLAVLLFLALLLQRTF) form a helical membrane-spanning segment. The Cytoplasmic segment spans residues 373 to 438 (LQASYYVAIE…MWFFFLCPNL (66 aa)). A helical transmembrane segment spans residues 439–454 (WAMPVQIIVGVILLYY). Residues 455 to 460 (ILGVSA) lie on the Extracellular side of the membrane. Residues 461 to 473 (LIGAAVIILLAPV) traverse the membrane as a helical segment. The Cytoplasmic portion of the chain corresponds to 474–541 (QYFVATKLSQ…SLRAFAVYTS (68 aa)). The helical transmembrane segment at 542–557 (ISIFMNTAIPIAAVLI) threads the bilayer. Over 558-576 (TFVGHVSFFKESDFSPSVA) the chain is Extracellular. A helical membrane pass occupies residues 577–592 (FASLSLFHILVTPLFL). The Cytoplasmic portion of the chain corresponds to 593-1013 (LSSVVRSTVK…YLSSAGILLL (421 aa)). The 252-residue stretch at 679–930 (VQIIGGFFTW…ECQLFEHWKT (252 aa)) folds into the ABC transporter 1 domain. ATP is bound by residues Trp688, Gly716, Ser720, and Ser721. Ser720 contacts Mg(2+). The segment at 741-768 (SSLPDSEGEDPSNPERETAADSDARSRG) is disordered. Residues 753–766 (NPERETAADSDARS) show a composition bias toward basic and acidic residues. Gln775 serves as a coordination point for Mg(2+). A compositionally biased stretch (basic and acidic residues) spans 939–950 (LEKETVMERKAP). Residues 939 to 962 (LEKETVMERKAPEPSQGLPRAMSS) are disordered. One can recognise an ABC transmembrane type-1 2 domain in the interval 1013-1307 (LSLLVFSQLL…MVRNLADMEI (295 aa)). Residues 1014-1031 (SLLVFSQLLKHMVLVAID) form a helical membrane-spanning segment. The Extracellular segment spans residues 1032 to 1067 (YWLAKWTDSALVLSPAARNCSLSQECALDQSVYAMV). The N-linked (GlcNAc...) asparagine glycan is linked to Asn1050. The helical transmembrane segment at 1068–1084 (FTVLCSLGIALCLVTSV) threads the bilayer. Residues 1085-1143 (TVEWTGLKVAKRLHRSLLNRIILAPMRFFETTPLGSILNRFSSDCNTIDQHIPSTLECL) are Cytoplasmic-facing. Residues 1144–1161 (SRSTLLCVSALAVISYVT) traverse the membrane as a helical segment. Residue Pro1162 is a topological domain, extracellular. Residues 1163 to 1175 (VFLVALLPLAVVC) traverse the membrane as a helical segment. Residues 1176–1249 (YFIQKYFRVA…FLTAANRWLE (74 aa)) lie on the Cytoplasmic side of the membrane. A helical membrane pass occupies residues 1250-1265 (VRMEYIGACVVLIAAA). Topologically, residues 1266 to 1281 (TSISNSLHRELSAGLV) are extracellular. Residues 1282 to 1297 (GLGLTYALMVSNYLNW) traverse the membrane as a helical segment. At 1298-1582 (MVRNLADMEI…VFASFVRADK (285 aa)) the chain is on the cytoplasmic side. The ABC transporter 2 domain occupies 1345 to 1579 (IQIQNLSVRY…KDSVFASFVR (235 aa)). 6 residues coordinate ADP: Thr1381, Gly1382, Gly1384, Lys1385, Ser1386, and Ser1387. Ser1483 serves as a coordination point for ATP.

Belongs to the ABC transporter superfamily. ABCC family. Conjugate transporter (TC 3.A.1.208) subfamily. Forms an heterooctamer with KCNJ11; four ABCC8/SUR1 molecules interact with one KCNJ11 homotetramer.

The protein localises to the cell membrane. Its activity is regulated as follows. KATP channels are regulated by cytoplasmic ATP/ADP ratios; ATP inhibits the channel by closing the pore, while ADP activates the channel. Activated by phosphatidylinositol 4,5-biphosphate (PtdIns(4,5)P2). In terms of biological role, regulator subunit of pancreatic ATP-sensitive potassium channel (KATP), playing a major role in the regulation of insulin release. In pancreatic cells, it forms KATP channels with KCNJ11; KCNJ11 forms the channel pore while ABCC8 is required for activation and regulation. This chain is ATP-binding cassette sub-family C member 8 (Abcc8), found in Rattus norvegicus (Rat).